Reading from the N-terminus, the 525-residue chain is MTENIHKHRILILDFGSQYTQLVARRVRELGVYCELWAWDVTEAQIRDFNPSGIILSGGPESTTEENSPRAPQYVFEAGVPVFGVCYGMQTMAMQLGGHVEASNEREFGYAQVEVVNDSALVRGIEDALTADGKPLLDVWMSHGDKVTAIPSDFVTVASTESCPFAIMANEEKRFYGVQFHPEVTHTRQGMHMLERFVRDICQCEALWTPAKIIDDAVARIREQVGDDKVILGLSGGVDSSVTAMLLHRAIGKNLTCVFVDNGLLRLNEAEQVLDMFGDHFGLNIVHVPAEDRFLSALAGENDPEAKRKIIGRVFVEVFDEEALKLEDVKWLAQGTIYPDVIESAASATGKAHVIKSHHNVGGLPKEMKMGLVEPLKELFKDEVRKIGLELGLPYDMLYRHPFPGPGLGVRVLGEVKKEYCDLLRRADAIFIEELRKADLYDKVSQAFTVFLPVRSVGVMGDGRKYDWVVSLRAVETIDFMTAHWAHLPYDFLGRVSNRIINEVNGISRVVYDISGKPPATIEWE.

The region spanning Arg9 to Leu207 is the Glutamine amidotransferase type-1 domain. Cys86 acts as the Nucleophile in catalysis. Active-site residues include His181 and Glu183. The GMPS ATP-PPase domain occupies Trp208–Arg400. Ser235 to Ser241 contacts ATP.

As to quaternary structure, homodimer.

It carries out the reaction XMP + L-glutamine + ATP + H2O = GMP + L-glutamate + AMP + diphosphate + 2 H(+). The protein operates within purine metabolism; GMP biosynthesis; GMP from XMP (L-Gln route): step 1/1. Functionally, catalyzes the synthesis of GMP from XMP. This is GMP synthase [glutamine-hydrolyzing] from Shigella boydii serotype 4 (strain Sb227).